The sequence spans 417 residues: Serine hydroxymethyltransferase (417 aa).

Residues leucine 121 and glycine 125 to leucine 127 contribute to the (6S)-5,6,7,8-tetrahydrofolate site. Lysine 229 is subject to N6-(pyridoxal phosphate)lysine. Serine 355–phenylalanine 357 serves as a coordination point for (6S)-5,6,7,8-tetrahydrofolate.

Belongs to the SHMT family. As to quaternary structure, homodimer. Requires pyridoxal 5'-phosphate as cofactor.

It localises to the cytoplasm. It catalyses the reaction (6R)-5,10-methylene-5,6,7,8-tetrahydrofolate + glycine + H2O = (6S)-5,6,7,8-tetrahydrofolate + L-serine. It functions in the pathway one-carbon metabolism; tetrahydrofolate interconversion. Its pathway is amino-acid biosynthesis; glycine biosynthesis; glycine from L-serine: step 1/1. Catalyzes the reversible interconversion of serine and glycine with tetrahydrofolate (THF) serving as the one-carbon carrier. This reaction serves as the major source of one-carbon groups required for the biosynthesis of purines, thymidylate, methionine, and other important biomolecules. Also exhibits THF-independent aldolase activity toward beta-hydroxyamino acids, producing glycine and aldehydes, via a retro-aldol mechanism. This chain is Serine hydroxymethyltransferase, found in Shewanella frigidimarina (strain NCIMB 400).